We begin with the raw amino-acid sequence, 131 residues long: Large ribosomal subunit protein bL12 (131 aa).

It belongs to the bacterial ribosomal protein bL12 family. As to quaternary structure, homodimer. Part of the ribosomal stalk of the 50S ribosomal subunit. Forms a multimeric L10(L12)X complex, where L10 forms an elongated spine to which 2 to 4 L12 dimers bind in a sequential fashion. Binds GTP-bound translation factors.

Forms part of the ribosomal stalk which helps the ribosome interact with GTP-bound translation factors. Is thus essential for accurate translation. This Prochlorococcus marinus (strain MIT 9515) protein is Large ribosomal subunit protein bL12.